The chain runs to 183 residues: ATP synthase subunit delta (183 aa).

Belongs to the ATPase delta chain family. As to quaternary structure, F-type ATPases have 2 components, F(1) - the catalytic core - and F(0) - the membrane proton channel. F(1) has five subunits: alpha(3), beta(3), gamma(1), delta(1), epsilon(1). F(0) has three main subunits: a(1), b(2) and c(10-14). The alpha and beta chains form an alternating ring which encloses part of the gamma chain. F(1) is attached to F(0) by a central stalk formed by the gamma and epsilon chains, while a peripheral stalk is formed by the delta and b chains.

The protein resides in the cell membrane. F(1)F(0) ATP synthase produces ATP from ADP in the presence of a proton or sodium gradient. F-type ATPases consist of two structural domains, F(1) containing the extramembraneous catalytic core and F(0) containing the membrane proton channel, linked together by a central stalk and a peripheral stalk. During catalysis, ATP synthesis in the catalytic domain of F(1) is coupled via a rotary mechanism of the central stalk subunits to proton translocation. Functionally, this protein is part of the stalk that links CF(0) to CF(1). It either transmits conformational changes from CF(0) to CF(1) or is implicated in proton conduction. In Halalkalibacterium halodurans (strain ATCC BAA-125 / DSM 18197 / FERM 7344 / JCM 9153 / C-125) (Bacillus halodurans), this protein is ATP synthase subunit delta.